The sequence spans 292 residues: Siderophore triacetylfusarinine C esterase (292 aa).

Residues Arg-97, Ser-148, Tyr-149, Ser-174, Trp-176, and His-267 each coordinate triacetylfusarinine C.

It belongs to the esterase D family.

The protein resides in the cytoplasm. It catalyses the reaction triacetylfusarinine C + 3 H2O = 3 N-acetylfusarinine + Fe(3+). In terms of biological role, displays specific triacetylfusarinine C (TAFC) esterase activity but does not hydrolyze fusarinine C, which has the same core structure as TAFC. Hydrolysis optimizes but is not essential for TAFC-mediated iron uptake. Both extra- and intracellular siderophores have been shown to be crucial for the virulence. Subsequent to chelation of iron and uptake, FsC and TAFC are hydrolyzed and the iron is transferred to the metabolism or to the intracellular siderophore ferricrocin (FC) for transport and storage of iron. Hydrolyzes both TAFC and DF-TAFC with equal efficiencies, suggesting that its function might not be restricted to the release of iron from the siderophore but might also include the degradation of the iron-free chelator to protect cells. This Aspergillus fumigatus (strain ATCC MYA-4609 / CBS 101355 / FGSC A1100 / Af293) (Neosartorya fumigata) protein is Siderophore triacetylfusarinine C esterase.